The sequence spans 164 residues: Decoration protein (164 aa).

The interval 1 to 72 is binding to the capsid hexamer; it reads MIDYSGLRTI…AIPPAPPAPP (72 aa). Positions 71 to 164 constitute an Ig-like domain; it reads PPLTLSKDLT…VTVNPTVPGG (94 aa).

As to quaternary structure, interacts with the major capsid protein; each hexon binds a single copy of the decoration protein.

The protein resides in the virion. Functionally, decoration protein that binds asymmetrically to the center of each capsid protein hexamer after capsid expansion. Stabilizes the capsid and protects from DNA release. This is Decoration protein from Escherichia phage T5 (Enterobacteria phage T5).